A 157-amino-acid chain; its full sequence is 2-C-methyl-D-erythritol 2,4-cyclodiphosphate synthase (157 aa).

D8 and H10 together coordinate a divalent metal cation. Residues 8–10 (DVH) and 34–35 (HS) contribute to the 4-CDP-2-C-methyl-D-erythritol 2-phosphate site. H42 is a binding site for a divalent metal cation. 4-CDP-2-C-methyl-D-erythritol 2-phosphate contacts are provided by residues 56–58 (DIG), 61–65 (FPDTD), 132–135 (TTTE), F139, and R142.

This sequence belongs to the IspF family. As to quaternary structure, homotrimer. It depends on a divalent metal cation as a cofactor.

The enzyme catalyses 4-CDP-2-C-methyl-D-erythritol 2-phosphate = 2-C-methyl-D-erythritol 2,4-cyclic diphosphate + CMP. Its pathway is isoprenoid biosynthesis; isopentenyl diphosphate biosynthesis via DXP pathway; isopentenyl diphosphate from 1-deoxy-D-xylulose 5-phosphate: step 4/6. Its function is as follows. Involved in the biosynthesis of isopentenyl diphosphate (IPP) and dimethylallyl diphosphate (DMAPP), two major building blocks of isoprenoid compounds. Catalyzes the conversion of 4-diphosphocytidyl-2-C-methyl-D-erythritol 2-phosphate (CDP-ME2P) to 2-C-methyl-D-erythritol 2,4-cyclodiphosphate (ME-CPP) with a corresponding release of cytidine 5-monophosphate (CMP). In Geotalea uraniireducens (strain Rf4) (Geobacter uraniireducens), this protein is 2-C-methyl-D-erythritol 2,4-cyclodiphosphate synthase.